The following is a 152-amino-acid chain: Prefoldin subunit alpha (152 aa).

Residues 110–152 (ETQEEVDELESESQELEQQAQQMQQQMQQQQMQQMQQSQGDEE) are disordered. Residues 111 to 124 (TQEEVDELESESQE) are compositionally biased toward acidic residues. A compositionally biased stretch (low complexity) spans 125–152 (LEQQAQQMQQQMQQQQMQQMQQSQGDEE).

This sequence belongs to the prefoldin alpha subunit family. In terms of assembly, heterohexamer of two alpha and four beta subunits.

It is found in the cytoplasm. In terms of biological role, molecular chaperone capable of stabilizing a range of proteins. Seems to fulfill an ATP-independent, HSP70-like function in archaeal de novo protein folding. This is Prefoldin subunit alpha from Halorubrum lacusprofundi (strain ATCC 49239 / DSM 5036 / JCM 8891 / ACAM 34).